Reading from the N-terminus, the 305-residue chain is UDP-N-acetylenolpyruvoylglucosamine reductase (305 aa).

Residues 35–214 (VGGPAQALFT…RARMNEVQAH (180 aa)) enclose the FAD-binding PCMH-type domain. The active site involves R179. S228 functions as the Proton donor in the catalytic mechanism. Residue E298 is part of the active site.

It belongs to the MurB family. FAD serves as cofactor.

Its subcellular location is the cytoplasm. The catalysed reaction is UDP-N-acetyl-alpha-D-muramate + NADP(+) = UDP-N-acetyl-3-O-(1-carboxyvinyl)-alpha-D-glucosamine + NADPH + H(+). It participates in cell wall biogenesis; peptidoglycan biosynthesis. In terms of biological role, cell wall formation. The polypeptide is UDP-N-acetylenolpyruvoylglucosamine reductase (Nitrobacter winogradskyi (strain ATCC 25391 / DSM 10237 / CIP 104748 / NCIMB 11846 / Nb-255)).